The following is a 754-amino-acid chain: Lysyl oxidase homolog 3 (754 aa).

Residues 1 to 26 form the signal peptide; sequence MRAVSVWYCCPWGLLLLHCLCSFSVG. SRCR domains lie at 45–146, 170–283, 308–408, and 418–526; these read FRLA…VICK, VRLR…VSCV, VRLK…VRCN, and IRLS…VICS. Disulfide bonds link Cys-71–Cys-135, Cys-84–Cys-145, Cys-115–Cys-125, Cys-202–Cys-272, Cys-215–Cys-282, Cys-249–Cys-259, Cys-333–Cys-397, Cys-346–Cys-407, Cys-377–Cys-387, Cys-447–Cys-512, Cys-460–Cys-525, Cys-493–Cys-503, Cys-555–Cys-561, Cys-607–Cys-655, Cys-639–Cys-645, Cys-667–Cys-677, and Cys-714–Cys-728. N-linked (GlcNAc...) asparagine glycosylation is present at Asn-112. A glycan (N-linked (GlcNAc...) asparagine) is linked at Asn-267. N-linked (GlcNAc...) asparagine glycans are attached at residues Asn-391 and Asn-482. Positions 530–733 are lysyl-oxidase like; it reads SDLLLHSALV…WVHNCHIGDA (204 aa). Positions 608, 610, and 612 each coordinate Cu cation. N-linked (GlcNAc...) asparagine glycosylation occurs at Asn-626. The segment at residues 635–671 is a cross-link (lysine tyrosylquinone (Lys-Tyr)); sequence KASFCLEDTECQEDVSKRYECANFGEQGITVGCWDLY. A 2',4',5'-topaquinone modification is found at Tyr-671.

It belongs to the lysyl oxidase family. Cu cation serves as cofactor. It depends on lysine tyrosylquinone residue as a cofactor. In terms of processing, the lysine tyrosylquinone cross-link (LTQ) is generated by condensation of the epsilon-amino group of a lysine with a topaquinone produced by oxidation of tyrosine. Expressed in palate: predominantly present in the palate mesenchyme and tongue (at protein level). In spine, expressed in the original intervertebral disk, cartilage primordia, anterior and posterior longitudinal ligaments, meninges of spinal cord, lung and heart. In eyes, strongly expressed in the skin of the eyelid and weakly expressed in the cornea and sclera. In lung, predominantly expressed in the pulmonary mesenchyme. In developing muscle, expressed at myofiber ends (at protein level).

The protein localises to the secreted. Its subcellular location is the extracellular space. It localises to the cytoplasm. The protein resides in the nucleus. The enzyme catalyses L-lysyl-[protein] + O2 + H2O = (S)-2-amino-6-oxohexanoyl-[protein] + H2O2 + NH4(+). It carries out the reaction N(6)-acetyl-L-lysyl-[protein] + O2 + H2O = acetamide + (S)-2-amino-6-oxohexanoyl-[protein] + H2O2. In terms of biological role, protein-lysine 6-oxidase that mediates the oxidation of peptidyl lysine residues to allysine in target proteins. Catalyzes the post-translational oxidative deamination of peptidyl lysine residues in precursors of elastin and different types of collagens, a prerequisite in the formation of cross-links between collagens and elastin. Required for somite boundary formation by catalyzing oxidation of fibronectin (FN1), enhancing integrin signaling in myofibers and their adhesion to the myotendinous junction (MTJ). Acts as a regulator of inflammatory response by inhibiting differentiation of naive CD4(+) T-cells into T-helper Th17 or regulatory T-cells (Treg): acts by interacting with STAT3 in the nucleus and catalyzing both deacetylation and oxidation of lysine residues on STAT3, leading to disrupt STAT3 dimerization and inhibit STAT3 transcription activity. Oxidation of lysine residues to allysine on STAT3 preferentially takes place on lysine residues that are acetylated. Also able to catalyze deacetylation of lysine residues on STAT3. This Mus musculus (Mouse) protein is Lysyl oxidase homolog 3.